Reading from the N-terminus, the 136-residue chain is Ribonuclease VapC47 (136 aa).

Positions 2 to 104 (IYMDTSALTK…AIHLAAAAQI (103 aa)) constitute a PINc domain. Mg(2+) contacts are provided by D5 and D94.

The protein belongs to the PINc/VapC protein family. The cofactor is Mg(2+).

In terms of biological role, toxic component of a type II toxin-antitoxin (TA) system. An RNase. Its toxic effect on colony formation is neutralized by coexpression with cognate antitoxin VapB47. The polypeptide is Ribonuclease VapC47 (Mycobacterium tuberculosis (strain CDC 1551 / Oshkosh)).